A 408-amino-acid polypeptide reads, in one-letter code: 5-hydroxytryptamine receptor 1A (408 aa).

The Extracellular portion of the chain corresponds to 1-32 (MDASNNTTSWNILQRGRMGPSWRRCPVSYQII). N-linked (GlcNAc...) asparagine glycosylation is found at N5 and N6. Residues 33–53 (ASLFLGRSFSAGIFGNACVIA) traverse the membrane as a helical segment. Topologically, residues 54 to 67 (AIALERSLQNVANY) are cytoplasmic. The chain crosses the membrane as a helical span at residues 68–92 (LIGSLAVTDLMVSVLVLPMAAQNQV). Over 93–101 (LNKWTLGQV) the chain is Extracellular. Residues 102 to 126 (TCDIFISLDVLCCTSSILHLCAIAL) traverse the membrane as a helical segment. An intrachain disulfide couples C103 to C181. D110 and C114 together coordinate serotonin. The DRY motif; important for ligand-induced conformation changes signature appears at 127–129 (DRY). Topologically, residues 127–146 (DRYWAITDPIDYVNKRTPRR) are cytoplasmic. A helical membrane pass occupies residues 147-168 (AAVLISITWIVGFSISIPPMLG). Residues 169–187 (WRTPEDRSDPNACRISEDP) lie on the Extracellular side of the membrane. The helical transmembrane segment at 188-210 (GYTIYSTFGAFYIPLILMLVLYG) threads the bilayer. At 211–333 (KIFKAARFRI…LARERKTVKT (123 aa)) the chain is on the cytoplasmic side. The interval 235 to 255 (TCLSVSQQSPKEKQRGAQQEL) is disordered. 1D-myo-inositol 4-phosphate contacts are provided by K332, T333, and G339. Residues 334–357 (LGIIMGTFILCWLPFFIVALVLPF) traverse the membrane as a helical segment. Topologically, residues 358-364 (CETCHMP) are extracellular. The helical transmembrane segment at 365 to 389 (HLLFDIITWLGYSNSLLNPIIYAYF) threads the bilayer. Positions 382 to 386 (NPIIY) match the NPxxY motif; important for ligand-induced conformation changes and signaling motif. 1D-myo-inositol 4-phosphate is bound by residues F389, N390, and K391. The Cytoplasmic segment spans residues 390-408 (NKDFQSAFKKIIKCKFCRQ).

It belongs to the G-protein coupled receptor 1 family. 5-hydroxytryptamine receptor subfamily. HTR1A sub-subfamily. As to expression, first expressed in the rostral part of the brain stem at stage 22. At later stages of development, expression is localized to serotonergic neurons. The expression pattern changes in the tadpole of stage 41 where, in addition to serotonergic neurons, expression is also localized to the inner nuclear layer (INL) of the developing retina. This expression pattern continues through to the start of metamorphosis (stage 46). In adults, expressed in the brain, in particular the telencephalon, diencephalon and mesencephalon. In the telencephalic region, expression is localized to the lateral, dorsal and medial pallium, and in the striatum, septum and amygdala. In the mesencephalic region, expression is strongest in the optic tectum and torus semicircularis with moderate levels of expression in tegmental nuclei. In diencephalon, localized to the dorsal and ventral thalamus and the preoptic area of the hypothalamus.

Its subcellular location is the cell membrane. Its activity is regulated as follows. G-protein coupled receptor activity is regulated by lipids: phosphatidylinositol 4-phosphate increases HTR1A-mediated activity. Its function is as follows. G-protein coupled receptor for 5-hydroxytryptamine (serotonin). Also functions as a receptor for various drugs and psychoactive substances. Ligand binding causes a conformation change that triggers signaling via guanine nucleotide-binding proteins (G proteins) and modulates the activity of downstream effectors, such as adenylate cyclase. HTR1A is coupled to G(i)/G(o) G alpha proteins and mediates inhibitory neurotransmission: signaling inhibits adenylate cyclase activity and activates a phosphatidylinositol-calcium second messenger system that regulates the release of Ca(2+) ions from intracellular stores. Beta-arrestin family members regulate signaling by mediating both receptor desensitization and resensitization processes. Activation of the receptor may play a role in the exit from G0 phase and in promoting DNA synthesis. The sequence is that of 5-hydroxytryptamine receptor 1A from Xenopus laevis (African clawed frog).